We begin with the raw amino-acid sequence, 940 residues long: AP-2 complex subunit alpha (940 aa).

Ser632 and Ser634 each carry phosphoserine. The span at 651 to 662 (SHSKLNNSNANT) shows a compositional bias: polar residues. The tract at residues 651 to 679 (SHSKLNNSNANTDLLGLSTPPSNNIGSGS) is disordered. Low complexity predominate over residues 668 to 679 (STPPSNNIGSGS).

This sequence belongs to the adaptor complexes large subunit family. As to quaternary structure, adaptor protein complex 2 (AP-2) is a heterotetramer composed of two large adaptins (alpha-type and beta-type subunits), a medium adaptin (mu-type subunit AP50) and a small adaptin (sigma-type subunit AP17). As to expression, expressed in the Garland cells, imaginal disks, adult midgut precursors, the antenno-maxillary complex, the endoderm, the fat bodies, and the visceral mesoderm and cells of the CNS and PNS including neuroblasts, the presumptive stomatogastric nervous system, and the lateral chordotonal sense organs.

The protein resides in the cell membrane. It localises to the membrane. The protein localises to the coated pit. Adaptins are components of the adapter complexes which link clathrin to receptors in coated vesicles. Clathrin-associated protein complexes are believed to interact with the cytoplasmic tails of membrane proteins, leading to their selection and concentration. AP-2alpha is a subunit of the plasma membrane adapter. In Drosophila melanogaster (Fruit fly), this protein is AP-2 complex subunit alpha (AP-2alpha).